A 445-amino-acid chain; its full sequence is Tubulin beta chain (445 aa).

The short motif at M1 to I4 is the MREI motif element. GTP is bound by residues Q11, E69, S138, G142, T143, G144, N204, and N226. Position 69 (E69) interacts with Mg(2+). The interval E421–A445 is disordered. Residues T429 to A445 show a composition bias toward acidic residues. A 5-glutamyl polyglutamate modification is found at E438.

It belongs to the tubulin family. As to quaternary structure, dimer of alpha and beta chains. A typical microtubule is a hollow water-filled tube with an outer diameter of 25 nm and an inner diameter of 15 nM. Alpha-beta heterodimers associate head-to-tail to form protofilaments running lengthwise along the microtubule wall with the beta-tubulin subunit facing the microtubule plus end conferring a structural polarity. Microtubules usually have 13 protofilaments but different protofilament numbers can be found in some organisms and specialized cells. The cofactor is Mg(2+). Post-translationally, some glutamate residues at the C-terminus are polyglycylated, resulting in polyglycine chains on the gamma-carboxyl group. Glycylation is mainly limited to tubulin incorporated into axonemes (cilia and flagella) whereas glutamylation is prevalent in neuronal cells, centrioles, axonemes, and the mitotic spindle. Both modifications can coexist on the same protein on adjacent residues, and lowering polyglycylation levels increases polyglutamylation, and reciprocally. The precise function of polyglycylation is still unclear. In terms of processing, some glutamate residues at the C-terminus are polyglutamylated, resulting in polyglutamate chains on the gamma-carboxyl group. Polyglutamylation plays a key role in microtubule severing by spastin (SPAST). SPAST preferentially recognizes and acts on microtubules decorated with short polyglutamate tails: severing activity by SPAST increases as the number of glutamates per tubulin rises from one to eight, but decreases beyond this glutamylation threshold. In terms of tissue distribution, brain.

The protein localises to the cytoplasm. Its subcellular location is the cytoskeleton. In terms of biological role, tubulin is the major constituent of microtubules, a cylinder consisting of laterally associated linear protofilaments composed of alpha- and beta-tubulin heterodimers. Microtubules grow by the addition of GTP-tubulin dimers to the microtubule end, where a stabilizing cap forms. Below the cap, tubulin dimers are in GDP-bound state, owing to GTPase activity of alpha-tubulin. The sequence is that of Tubulin beta chain from Pseudopleuronectes americanus (Winter flounder).